Consider the following 443-residue polypeptide: Probable protein S-acyltransferase 7 (443 aa).

The next 2 membrane-spanning stretches (helical) occupy residues 44–64 (SLAL…IFVA) and 76–96 (GVSI…LLLL). The DHHC domain maps to 149–199 (KYCDTCMLYRPPRCSHCSICNNCVERFDHHCPWVGQCIGMRNYRFFFMFVF). Cysteine 179 functions as the S-palmitoyl cysteine intermediate in the catalytic mechanism. Transmembrane regions (helical) follow at residues 193–213 (FFFM…AFCW) and 237–257 (SIVL…LTVF). Phosphoserine occurs at positions 327 and 377. Residues 382 to 392 (ATVDEQSDRPS) are compositionally biased toward basic and acidic residues. The tract at residues 382–443 (ATVDEQSDRP…SGLVTENRPT (62 aa)) is disordered. Residue serine 406 is modified to Phosphoserine.

The protein belongs to the DHHC palmitoyltransferase family.

It is found in the cell membrane. The enzyme catalyses L-cysteinyl-[protein] + hexadecanoyl-CoA = S-hexadecanoyl-L-cysteinyl-[protein] + CoA. In terms of biological role, palmitoyl acyltransferase. This chain is Probable protein S-acyltransferase 7 (PAT07), found in Arabidopsis thaliana (Mouse-ear cress).